Consider the following 367-residue polypeptide: GMP synthase [glutamine-hydrolyzing] subunit B (367 aa).

The 189-residue stretch at phenylalanine 2–arginine 190 folds into the GMPS ATP-PPase domain. Residue serine 29–threonine 35 coordinates ATP.

As to quaternary structure, heterodimer composed of a glutamine amidotransferase subunit (A) and a GMP-binding subunit (B).

It carries out the reaction XMP + L-glutamine + ATP + H2O = GMP + L-glutamate + AMP + diphosphate + 2 H(+). Its pathway is purine metabolism; GMP biosynthesis; GMP from XMP (L-Gln route): step 1/1. Functionally, catalyzes the synthesis of GMP from XMP. The protein is GMP synthase [glutamine-hydrolyzing] subunit B of Saccharolobus islandicus (strain M.16.27) (Sulfolobus islandicus).